Reading from the N-terminus, the 203-residue chain is Glycerol-3-phosphate acyltransferase (203 aa).

The next 6 helical transmembrane spans lie at Ile3–Ser23, Lys51–Val71, Phe74–Leu94, Ala116–Phe136, Ser140–Thr160, and Pro164–Trp178.

This sequence belongs to the PlsY family. As to quaternary structure, probably interacts with PlsX.

The protein localises to the cell inner membrane. The catalysed reaction is an acyl phosphate + sn-glycerol 3-phosphate = a 1-acyl-sn-glycero-3-phosphate + phosphate. Its pathway is lipid metabolism; phospholipid metabolism. Catalyzes the transfer of an acyl group from acyl-phosphate (acyl-PO(4)) to glycerol-3-phosphate (G3P) to form lysophosphatidic acid (LPA). This enzyme utilizes acyl-phosphate as fatty acyl donor, but not acyl-CoA or acyl-ACP. This chain is Glycerol-3-phosphate acyltransferase, found in Burkholderia mallei (strain ATCC 23344).